The chain runs to 198 residues: Superoxide dismutase [Mn], mitochondrial (198 aa).

Position 26 (His26) interacts with Mn(2+). At Tyr34 the chain carries 3'-nitrotyrosine. Residues Lys44 and Lys51 each carry the N6-acetyllysine; alternate modification. Lys44 and Lys51 each carry N6-succinyllysine; alternate. A Mn(2+)-binding site is contributed by His74. At Lys90 the chain carries N6-acetyllysine. Residues Lys98 and Lys106 each carry the N6-acetyllysine; alternate modification. 2 positions are modified to N6-succinyllysine; alternate: Lys98 and Lys106. Mn(2+) contacts are provided by Asp159 and His163. Lys178 carries the post-translational modification N6-acetyllysine.

This sequence belongs to the iron/manganese superoxide dismutase family. As to quaternary structure, homotetramer. Mn(2+) serves as cofactor. In terms of processing, nitrated under oxidative stress. Nitration coupled with oxidation inhibits the catalytic activity. Post-translationally, acetylation at Lys-98 decreases enzymatic activity. Deacetylated by SIRT3 upon exposure to ionizing radiations or after long fasting. Polyubiquitinated; leading to proteasomal degradation. Deubiquitinated by USP36 which increases protein stability.

It is found in the mitochondrion matrix. The catalysed reaction is 2 superoxide + 2 H(+) = H2O2 + O2. In terms of biological role, destroys superoxide anion radicals which are normally produced within the cells and which are toxic to biological systems. This is Superoxide dismutase [Mn], mitochondrial (SOD2) from Callithrix jacchus (White-tufted-ear marmoset).